The following is a 258-amino-acid chain: MVTNFNGILLFRRDYRERDMLIKFLTAEYGKKMFFIRGARRRGFKMAAELLPFTMGEYVGDLRDQGLSYINSVKSVQYLEHISQDIALNAYATYVMNLMDVAFPDNQPVGRWYQQLTSALQLIDQDVAPALVANVVEIQLLQPFGVAPELRWCTVCGRSDLPLDYSESYGGLLCQQHWHLDPHRLHASPAAIFYLRQFSVLDLAKVHSIKVKPRTAAELRRILDEIYQNSVGVRLKSKRFIDQMGSWYQPLAPRKNED.

This sequence belongs to the RecO family.

In terms of biological role, involved in DNA repair and RecF pathway recombination. This is DNA repair protein RecO from Lactiplantibacillus plantarum (strain ATCC BAA-793 / NCIMB 8826 / WCFS1) (Lactobacillus plantarum).